The sequence spans 1342 residues: DNA-directed RNA polymerase subunit beta (1342 aa).

Belongs to the RNA polymerase beta chain family. As to quaternary structure, the RNAP catalytic core consists of 2 alpha, 1 beta, 1 beta' and 1 omega subunit. When a sigma factor is associated with the core the holoenzyme is formed, which can initiate transcription.

It carries out the reaction RNA(n) + a ribonucleoside 5'-triphosphate = RNA(n+1) + diphosphate. Functionally, DNA-dependent RNA polymerase catalyzes the transcription of DNA into RNA using the four ribonucleoside triphosphates as substrates. This is DNA-directed RNA polymerase subunit beta from Sodalis glossinidius (strain morsitans).